Here is a 286-residue protein sequence, read N- to C-terminus: 4-diphosphocytidyl-2-C-methyl-D-erythritol kinase (286 aa).

The active site involves Lys-11. 94–104 lines the ATP pocket; sequence PMGGGIGGGSS. Residue Asp-136 is part of the active site.

Belongs to the GHMP kinase family. IspE subfamily.

It catalyses the reaction 4-CDP-2-C-methyl-D-erythritol + ATP = 4-CDP-2-C-methyl-D-erythritol 2-phosphate + ADP + H(+). It functions in the pathway isoprenoid biosynthesis; isopentenyl diphosphate biosynthesis via DXP pathway; isopentenyl diphosphate from 1-deoxy-D-xylulose 5-phosphate: step 3/6. Catalyzes the phosphorylation of the position 2 hydroxy group of 4-diphosphocytidyl-2C-methyl-D-erythritol. The protein is 4-diphosphocytidyl-2-C-methyl-D-erythritol kinase of Pseudomonas entomophila (strain L48).